The sequence spans 624 residues: Probable potassium transport system protein Kup 1 (624 aa).

12 helical membrane passes run 10-30 (LALG…LYAL), 48-68 (LSLI…MIIF), 94-114 (PLFY…GMLT), 133-153 (LYPY…SLQA), 159-179 (IGYL…ILGI), 210-230 (LLLG…ADIG), 242-262 (FFAA…NLIV), 270-290 (PFFM…ATVA), 331-351 (IYVP…CLAF), 363-383 (IAVN…AISI), 388-408 (IFNV…FLGA), and 413-433 (FITG…IMYS).

Belongs to the HAK/KUP transporter (TC 2.A.72) family.

The protein resides in the cell inner membrane. It catalyses the reaction K(+)(in) + H(+)(in) = K(+)(out) + H(+)(out). Functionally, transport of potassium into the cell. Likely operates as a K(+):H(+) symporter. The sequence is that of Probable potassium transport system protein Kup 1 from Legionella pneumophila (strain Lens).